A 211-amino-acid chain; its full sequence is Arginine exporter protein ArgO (211 aa).

The next 6 membrane-spanning stretches (helical) occupy residues 1 to 21 (MISYYFQGFALGAAMILPLGP), 37 to 57 (LMIALLCALSDLVLISAGIFG), 68 to 88 (LLALVTWGGVAFLLWYGFGAL), 111 to 131 (IIATMLAVTWLNPHVYLDTFV), 147 to 167 (WFALGTISASFLWFFGLALLA), and 179 to 199 (AQRIINILVGVVMWLIAFQLA).

The protein belongs to the LysE/ArgO transporter (TC 2.A.75) family.

Its subcellular location is the cell inner membrane. The enzyme catalyses L-arginine(in) = L-arginine(out). Its function is as follows. Involved in the export of arginine. Important to control the intracellular level of arginine and the correct balance between arginine and lysine. The chain is Arginine exporter protein ArgO from Salmonella newport (strain SL254).